A 508-amino-acid polypeptide reads, in one-letter code: Steroid 17-alpha-hydroxylase/17,20 lyase (508 aa).

N202 contacts substrate. C442 contributes to the heme binding site.

Belongs to the cytochrome P450 family. It depends on heme as a cofactor.

It localises to the endoplasmic reticulum membrane. It is found in the microsome membrane. The enzyme catalyses a C21-steroid + reduced [NADPH--hemoprotein reductase] + O2 = a 17alpha-hydroxy-C21-steroid + oxidized [NADPH--hemoprotein reductase] + H2O + H(+). It catalyses the reaction progesterone + reduced [NADPH--hemoprotein reductase] + O2 = 17alpha-hydroxyprogesterone + oxidized [NADPH--hemoprotein reductase] + H2O + H(+). The catalysed reaction is pregnenolone + reduced [NADPH--hemoprotein reductase] + O2 = 17alpha-hydroxypregnenolone + oxidized [NADPH--hemoprotein reductase] + H2O + H(+). It carries out the reaction 17alpha-hydroxypregnenolone + reduced [NADPH--hemoprotein reductase] + O2 = 3beta-hydroxyandrost-5-en-17-one + acetate + oxidized [NADPH--hemoprotein reductase] + H2O + 2 H(+). The protein operates within steroid hormone biosynthesis. It functions in the pathway steroid biosynthesis; glucocorticoid biosynthesis. With respect to regulation, regulated predominantly by intracellular cAMP levels. The 17,20-lyase activity is stimulated by cytochrome b5, which acts as an allosteric effector increasing the Vmax of the lyase activity. In terms of biological role, a cytochrome P450 monooxygenase involved in corticoid and androgen biosynthesis. Catalyzes 17-alpha hydroxylation of C21 steroids, which is common for both pathways. A second oxidative step, required only for androgen synthesis, involves an acyl-carbon cleavage. Hydroxylates pregnenolone to form 17-alpha pregnenolone, followed by the cleavage of the C17-C20 bond to form dehydroepiandrosterone (DHEA). Has 17-alpha hydroxylase activity toward progesterone. The 17-alpha hydroxy intermediates, as part of adrenal glucocorticoids biosynthesis pathway, are precursors of cortisol. Mechanistically, uses molecular oxygen inserting one oxygen atom into a substrate, and reducing the second into a water molecule, with two electrons provided by NADPH via cytochrome P450 reductase (CPR; NADPH-ferrihemoprotein reductase). The sequence is that of Steroid 17-alpha-hydroxylase/17,20 lyase (CYP17A1) from Papio hamadryas ursinus (Chacma baboon).